A 22-amino-acid chain; its full sequence is Chlorophyllase type 1 (22 aa).

This sequence belongs to the AB hydrolase superfamily. Lipase family.

It catalyses the reaction a chlorophyll + H2O = a chlorophyllide + phytol + H(+). It participates in porphyrin-containing compound metabolism; chlorophyll degradation. Functionally, catalyzes the hydrolysis of ester bond in chlorophyll to yield chlorophyllide and phytol. The polypeptide is Chlorophyllase type 1 (Chenopodium album (Fat hen)).